The primary structure comprises 289 residues: Polyketide biosynthesis malonyl CoA-acyl carrier protein transacylase BaeC (289 aa).

Catalysis depends on residues Ser-87 and His-193.

This sequence belongs to the FabD family.

Its subcellular location is the cytoplasm. It catalyses the reaction holo-[ACP] + malonyl-CoA = malonyl-[ACP] + CoA. Its pathway is antibiotic biosynthesis; bacillaene biosynthesis. Its function is as follows. Involved in some intermediate steps for the synthesis of the antibiotic polyketide bacillaene which is involved in secondary metabolism. It catalyzes the transfer of the malonyl-CoA group to the acyl-carrier-protein AcpK (Mal-AcpK). This chain is Polyketide biosynthesis malonyl CoA-acyl carrier protein transacylase BaeC (baeC), found in Bacillus velezensis (strain DSM 23117 / BGSC 10A6 / LMG 26770 / FZB42) (Bacillus amyloliquefaciens subsp. plantarum).